We begin with the raw amino-acid sequence, 161 residues long: Spermidine N(1)-acetyltransferase (161 aa).

The N-acetyltransferase domain occupies 3-160; it reads IEIRKLSIED…SDFIMEKKYE (158 aa). Acetyl-CoA is bound by residues 92–94, 99–104, N131, and S136; these read LYL and THKKIG. Y138 (proton donor) is an active-site residue. K140 contributes to the acetyl-CoA binding site.

This sequence belongs to the acetyltransferase family. In terms of assembly, monomer or homodimer.

It carries out the reaction an alkane-alpha,omega-diamine + acetyl-CoA = an N-acetylalkane-alpha,omega-diamine + CoA + H(+). Involved in the protection against polyamine toxicity by regulating their concentration. Could also be involved in the negative control of sporulation as well as production of degradative enzymes such as alpha-amylase, levansucrase and alkaline phosphatase. Catalyzes the transfer of an acetyl group from acetyl coenzyme A (AcCoA) to an acceptor substrate and release both CoA and the acetylated product. It can use a variety of substrates including spermidine, L-tryptophan, L-leucine, L-lysine, dopamine and tyramine. This chain is Spermidine N(1)-acetyltransferase, found in Thermoplasma acidophilum (strain ATCC 25905 / DSM 1728 / JCM 9062 / NBRC 15155 / AMRC-C165).